A 113-amino-acid chain; its full sequence is Translation initiation factor 1A (113 aa).

The S1-like domain maps to 12–87 (EVIRVPLPEG…KRGDIVYRYT (76 aa)).

This sequence belongs to the eIF-1A family.

Seems to be required for maximal rate of protein biosynthesis. Enhances ribosome dissociation into subunits and stabilizes the binding of the initiator Met-tRNA(I) to 40 S ribosomal subunits. The sequence is that of Translation initiation factor 1A (eIF1A) from Pyrococcus abyssi (strain GE5 / Orsay).